A 400-amino-acid polypeptide reads, in one-letter code: Sensory histidine kinase/phosphatase NtrB (400 aa).

2 stretches are compositionally biased toward low complexity: residues 1 to 10 (MARASAAAPL) and 18 to 27 (RAPSSSYRPV). The tract at residues 1–27 (MARASAAAPLPRRPARPRAPSSSYRPV) is disordered. The region spanning 29–99 (PCIDPSVMLN…IEQVQQGRHR (71 aa)) is the PAS domain. The Histidine kinase domain maps to 163-381 (MLGHEVKNPL…VFKVSLPMFD (219 aa)). At H166 the chain carries Phosphohistidine; by autocatalysis.

In terms of processing, autophosphorylated.

It is found in the cytoplasm. It carries out the reaction ATP + protein L-histidine = ADP + protein N-phospho-L-histidine.. Member of the two-component regulatory system NtrB/NtrC, which controls expression of the nitrogen-regulated (ntr) genes in response to nitrogen limitation. Under conditions of nitrogen limitation, NtrB autophosphorylates and transfers the phosphoryl group to NtrC. In the presence of nitrogen, acts as a phosphatase that dephosphorylates and inactivates NtrC. The sequence is that of Sensory histidine kinase/phosphatase NtrB from Azospirillum brasilense.